The primary structure comprises 134 residues: RxLR effector protein Avh238 (134 aa).

Positions 1–21 (MRGVFFVAVAVAIFARSSAEA) are cleaved as a signal peptide. A RxLR-dEER motif is present at residues 44-68 (RFLRVADSEDDDLAAPADDGKTEER). Residues 50 to 72 (DSEDDDLAAPADDGKTEERAPKF) form a disordered region. Positions 61 to 70 (DDGKTEERAP) are enriched in basic and acidic residues.

This sequence belongs to the RxLR effector family.

The protein localises to the secreted. The protein resides in the host cytoplasm. It localises to the host nucleus. Functionally, effector that, due to the lack of a histidine residue at position 79, is not able to induce cell death in tomato, tobacco, eggplant, potato, or in A.thaliana. This chain is RxLR effector protein Avh238, found in Phytophthora sojae (Soybean stem and root rot agent).